Reading from the N-terminus, the 434-residue chain is ATP-dependent protease ATPase subunit HslU (434 aa).

ATP-binding positions include I18, 60 to 65, D247, E312, and R384; that span reads GVGKTE.

It belongs to the ClpX chaperone family. HslU subfamily. In terms of assembly, a double ring-shaped homohexamer of HslV is capped on each side by a ring-shaped HslU homohexamer. The assembly of the HslU/HslV complex is dependent on binding of ATP.

It is found in the cytoplasm. In terms of biological role, ATPase subunit of a proteasome-like degradation complex; this subunit has chaperone activity. The binding of ATP and its subsequent hydrolysis by HslU are essential for unfolding of protein substrates subsequently hydrolyzed by HslV. HslU recognizes the N-terminal part of its protein substrates and unfolds these before they are guided to HslV for hydrolysis. The polypeptide is ATP-dependent protease ATPase subunit HslU (Brucella melitensis biotype 1 (strain ATCC 23456 / CCUG 17765 / NCTC 10094 / 16M)).